Reading from the N-terminus, the 420-residue chain is Glutamyl-tRNA reductase (420 aa).

Residues 49-52 (TCNR), Ser-107, 112-114 (EPQ), and Gln-118 each bind substrate. Cys-50 serves as the catalytic Nucleophile. NADP(+) is bound at residue 187 to 192 (GAGETI).

It belongs to the glutamyl-tRNA reductase family. In terms of assembly, homodimer.

The enzyme catalyses (S)-4-amino-5-oxopentanoate + tRNA(Glu) + NADP(+) = L-glutamyl-tRNA(Glu) + NADPH + H(+). The protein operates within porphyrin-containing compound metabolism; protoporphyrin-IX biosynthesis; 5-aminolevulinate from L-glutamyl-tRNA(Glu): step 1/2. Catalyzes the NADPH-dependent reduction of glutamyl-tRNA(Glu) to glutamate 1-semialdehyde (GSA). The sequence is that of Glutamyl-tRNA reductase from Nitrosococcus oceani (strain ATCC 19707 / BCRC 17464 / JCM 30415 / NCIMB 11848 / C-107).